The sequence spans 247 residues: uncharacterized protein (247 aa).

The 136-residue stretch at 70 to 205 folds into the N-acetyltransferase domain; it reads ISLWMGPGNN…QKVPLEIMIR (136 aa).

It belongs to the acetyltransferase family.

The protein localises to the endoplasmic reticulum. The protein resides in the golgi apparatus. Its subcellular location is the vacuole. This is an uncharacterized protein from Schizosaccharomyces pombe (strain 972 / ATCC 24843) (Fission yeast).